Reading from the N-terminus, the 212-residue chain is Pyridoxine/pyridoxamine 5'-phosphate oxidase (212 aa).

Substrate contacts are provided by residues 7–10 (RREY) and Lys65. FMN is bound by residues 60–65 (RIVLLK), 75–76 (FT), Arg81, Lys82, and Gln104. 3 residues coordinate substrate: Tyr122, Arg126, and Ser130. Residues 139–140 (QS) and Trp184 contribute to the FMN site. 190–192 (RLH) is a substrate binding site. FMN is bound at residue Arg194.

The protein belongs to the pyridoxamine 5'-phosphate oxidase family. In terms of assembly, homodimer. FMN is required as a cofactor.

It catalyses the reaction pyridoxamine 5'-phosphate + O2 + H2O = pyridoxal 5'-phosphate + H2O2 + NH4(+). The enzyme catalyses pyridoxine 5'-phosphate + O2 = pyridoxal 5'-phosphate + H2O2. Its pathway is cofactor metabolism; pyridoxal 5'-phosphate salvage; pyridoxal 5'-phosphate from pyridoxamine 5'-phosphate: step 1/1. It functions in the pathway cofactor metabolism; pyridoxal 5'-phosphate salvage; pyridoxal 5'-phosphate from pyridoxine 5'-phosphate: step 1/1. Its function is as follows. Catalyzes the oxidation of either pyridoxine 5'-phosphate (PNP) or pyridoxamine 5'-phosphate (PMP) into pyridoxal 5'-phosphate (PLP). The sequence is that of Pyridoxine/pyridoxamine 5'-phosphate oxidase from Pseudoalteromonas translucida (strain TAC 125).